A 253-amino-acid polypeptide reads, in one-letter code: Geranylgeranylglyceryl phosphate synthase (253 aa).

Residues aspartate 28 and serine 53 each coordinate Mg(2+). Residues 172–178, 203–204, and 225–226 contribute to the sn-glycerol 1-phosphate site; these read YLEAGSG, GG, and GN.

It belongs to the GGGP/HepGP synthase family. Group II subfamily. It depends on Mg(2+) as a cofactor.

The protein resides in the cytoplasm. It catalyses the reaction sn-glycerol 1-phosphate + (2E,6E,10E)-geranylgeranyl diphosphate = sn-3-O-(geranylgeranyl)glycerol 1-phosphate + diphosphate. It functions in the pathway membrane lipid metabolism; glycerophospholipid metabolism. Its function is as follows. Prenyltransferase that catalyzes the transfer of the geranylgeranyl moiety of geranylgeranyl diphosphate (GGPP) to the C3 hydroxyl of sn-glycerol-1-phosphate (G1P). This reaction is the first ether-bond-formation step in the biosynthesis of archaeal membrane lipids. The sequence is that of Geranylgeranylglyceryl phosphate synthase from Methanocaldococcus jannaschii (strain ATCC 43067 / DSM 2661 / JAL-1 / JCM 10045 / NBRC 100440) (Methanococcus jannaschii).